We begin with the raw amino-acid sequence, 117 residues long: MPSPGTVCSLLLFSMLWADLAMAGSSFLSPEHQKVQQRKESKKPPAKLQPRALEGLIHPEDTSQVEGAEDELEIRFNAPFDVGIKLSGAQYHQHGQALGKFLQDVLWEEADEVLADE.

The first 23 residues, 1 to 23 (MPSPGTVCSLLLFSMLWADLAMA), serve as a signal peptide directing secretion. Ser-26 carries the O-decanoyl serine; alternate lipid modification. Ser-26 carries O-hexanoyl serine; alternate lipidation. The O-octanoyl serine; alternate moiety is linked to residue Ser-26. The segment at 29-52 (SPEHQKVQQRKESKKPPAKLQPRA) is disordered. Over residues 31–43 (EHQKVQQRKESKK) the composition is skewed to basic and acidic residues. Residues 52-75 (ALEGLIHPEDTSQVEGAEDELEIR) constitute a propeptide, removed in mature form. Leu-98 carries the leucine amide modification. The propeptide at 99 to 117 (GKFLQDVLWEEADEVLADE) is removed in mature form.

It belongs to the motilin family. Post-translationally, O-octanoylated by GOAT/MBOAT4. O-octanoylation or O-decanoylation is essential for ghrelin activity. The O-decanoylated forms Ghrelin-27-C10 and Ghrelin-28-C10 differ in the length of the carbon backbone of the carboxylic acid bound to Ser-26. A small fraction of ghrelin, ghrelin-27-C10:1, ghrelin-27-C10:2, ghrelin-28-C8:1, ghrelin-28-C10:1, and ghrelin-28-C10:2, may be modified with singly or doubly unsaturated carboxylic acids. Amidation of Leu-98 is essential for obestatin activity.

It is found in the secreted. Functionally, ghrelin is the ligand for growth hormone secretagogue receptor type 1 (GHSR). Induces the release of growth hormone from the pituitary. Has an appetite-stimulating effect, induces adiposity and stimulates gastric acid secretion. Involved in growth regulation. Obestatin may be the ligand for GPR39. May have an appetite-reducing effect resulting in decreased food intake. May reduce gastric emptying activity and jejunal motility. The chain is Appetite-regulating hormone (GHRL) from Felis catus (Cat).